The sequence spans 1412 residues: uncharacterized protein (1412 aa).

The tract at residues 1–22 (MESINVVNSVEDLPGFNPDENV) is disordered. 2 coiled-coil regions span residues 317 to 377 (NNDF…ILRH) and 732 to 800 (SKEA…SDDE). Residues 778–808 (SRKRKHEDIVKEHEAEKRDSDDEDDFEEVDV) form a disordered region. Residues 783–797 (HEDIVKEHEAEKRDS) are compositionally biased toward basic and acidic residues. A compositionally biased stretch (acidic residues) spans 798-808 (DDEDDFEEVDV).

This is an uncharacterized protein from Magallana gigas (Pacific oyster).